The sequence spans 579 residues: Potassium-transporting ATPase potassium-binding subunit (579 aa).

A run of 10 helical transmembrane segments spans residues methionine 1 to valine 21, histidine 64 to glutamine 84, glycine 135 to isoleucine 155, isoleucine 178 to valine 198, phenylalanine 265 to methionine 285, tryptophan 293 to alanine 313, glycine 398 to glycine 418, methionine 435 to valine 455, tryptophan 503 to alanine 523, and leucine 549 to glycine 569.

This sequence belongs to the KdpA family. In terms of assembly, the system is composed of three essential subunits: KdpA, KdpB and KdpC.

The protein localises to the cell membrane. In terms of biological role, part of the high-affinity ATP-driven potassium transport (or Kdp) system, which catalyzes the hydrolysis of ATP coupled with the electrogenic transport of potassium into the cytoplasm. This subunit binds the extracellular potassium ions and delivers the ions to the membrane domain of KdpB through an intramembrane tunnel. The polypeptide is Potassium-transporting ATPase potassium-binding subunit (Herpetosiphon aurantiacus (strain ATCC 23779 / DSM 785 / 114-95)).